Reading from the N-terminus, the 1545-residue chain is MSLSFCGNNISSYNIYHGVLQNPCFVDALNLVPHVFLLFITFPILFIGWGSQSSKVQIHHNTWLHFPGHNLRWILTFALLFVHVCEIAEGIVSDSQRASRHLHLFMPAVMGFVATTTSIVYYHNIETSNFPKLLLALFLYWVMAFITKTIKLVKYWQLGWGMSDLRFCITGVMVILNGLLMAVEINVIRVRRYVFFMNPQKVKPPEDLQDLGVRFLQPFVNLLSKATYWWMNTLIISAHRKPIDLKAIGKLPIAMRAVTNYVCLKEAYEEQKKKAADHPNRTPSIWLAMYRAFGRPILLSSTFRYLADLLGFAGPLCISGIVQRVNEPKNNTTRFSETLSSKEFLENAHVLAVLLFLALILQRTFLQASYYVTIETGINLRGALLAMIYNKILRLSTSNLSMGEMTLGQINNLVAIETNQLMWFLFLCPNLWAMPVQIIMGVILLYNLLGSSALVGAAVIVLLAPIQYFIATKLAEAQKSTLDYSTERLKKTNEILKGIKLLKLYAWEHIFCKSVEETRMKELSSLKTFALYTSLSIFMNAAIPIAAVLATFVTHAYASGNNLKPAEAFASLSLFHILVTPLFLLSTVVRFAVKAIISVQKLNEFLLSDEIGEDSWRTGEGTLPFESCKKHTGVQSKPINRKQPGRYHLDNYEQARRLRPAETEDVAIKVTNGYFSWGSGLATLSNIDIRIPTGQLTMIVGQVGCGKSSLLLAILGEMQTLEGKVYWNNVNESEPSFEATRSRSRYSVAYAAQKPWLLNATVEENITFGSSFNRQRYKAVTDACSLQPDIDLLPFGDQTEIGERGINLSGGQRQRICVARALYQNTNIVFLDDPFSALDIHLSDHLMQEGILKFLQDDKRTVVLVTHKLQYLTHADWIIAMKDGSVLREGTLKDIQTKDVELYEHWKTLMNRQDQELEKDMEADQTTLERKTLRRAMYSREAKAQMEDEDEEEEEEEDEDDNMSTVMRLRTKMPWKTCWWYLTSGGFFLLFLMIFSKLLKHSVIVAIDYWLATWTSEYSINDPGKADQTFYVAGFSILCGAGIFLCLVTSLTVEWMGLTAAKNLHHNLLNKIILGPIRFFDTTPLGLILNRFSADTNIIDQHIPPTLESLTRSTLLCLSAIGMISYATPVFLIALAPLGVAFYFIQKYFRVASKDLQELDDSTQLPLLCHFSETAEGLTTIRAFRHETRFKQRMLELTDTNNIAYLFLSAANRWLEVRTDYLGACIVLTASIASISGSSNSGLVGLGLLYALTITNYLNWVVRNLADLEVQMGAVKKVNSFLTMESENYEGTMDPSQVPEHWPQEGEIKIHDLCVRYENNLKPVLKHVKAYIKPGQKVGICGRTGSGKSSLSLAFFRMVDIFDGKIVIDGIDISKLPLHTLRSRLSIILQDPILFSGSIRFNLDPECKCTDDRLWEALEIAQLKNMVKSLPGGLDATVTEGGENFSVGQRQLFCLARAFVRKSSILIMDEATASIDMATENILQKVVMTAFADRTVVTIAHRVSSIMDAGLVLVFSEGILVECDTGPNLLQHKNGLFSTLVMTNK.

Residues 1–30 (MSLSFCGNNISSYNIYHGVLQNPCFVDALN) lie on the Extracellular side of the membrane. N-linked (GlcNAc...) asparagine glycosylation occurs at asparagine 9. A helical membrane pass occupies residues 31-51 (LVPHVFLLFITFPILFIGWGS). Residues 52-72 (QSSKVQIHHNTWLHFPGHNLR) lie on the Cytoplasmic side of the membrane. Residues 73–93 (WILTFALLFVHVCEIAEGIVS) traverse the membrane as a helical segment. Over 94 to 101 (DSQRASRH) the chain is Extracellular. A helical transmembrane segment spans residues 102–122 (LHLFMPAVMGFVATTTSIVYY). Topologically, residues 123 to 132 (HNIETSNFPK) are cytoplasmic. A helical membrane pass occupies residues 133 to 153 (LLLALFLYWVMAFITKTIKLV). Topologically, residues 154 to 167 (KYWQLGWGMSDLRF) are extracellular. Residues 168–188 (CITGVMVILNGLLMAVEINVI) form a helical membrane-spanning segment. At 189–301 (RVRRYVFFMN…AFGRPILLSS (113 aa)) the chain is on the cytoplasmic side. The 298-residue stretch at 297–594 (ILLSSTFRYL…LSTVVRFAVK (298 aa)) folds into the ABC transmembrane type-1 1 domain. The helical transmembrane segment at 302 to 322 (TFRYLADLLGFAGPLCISGIV) threads the bilayer. The Extracellular portion of the chain corresponds to 323–347 (QRVNEPKNNTTRFSETLSSKEFLEN). Asparagine 330 and asparagine 331 each carry an N-linked (GlcNAc...) asparagine glycan. Residues 348–368 (AHVLAVLLFLALILQRTFLQA) traverse the membrane as a helical segment. Topologically, residues 369–420 (SYYVTIETGINLRGALLAMIYNKILRLSTSNLSMGEMTLGQINNLVAIETNQ) are cytoplasmic. A helical transmembrane segment spans residues 421-441 (LMWFLFLCPNLWAMPVQIIMG). At 442–452 (VILLYNLLGSS) the chain is on the extracellular side. A helical transmembrane segment spans residues 453 to 473 (ALVGAAVIVLLAPIQYFIATK). At 474–528 (LAEAQKSTLDYSTERLKKTNEILKGIKLLKLYAWEHIFCKSVEETRMKELSSLKT) the chain is on the cytoplasmic side. The helical transmembrane segment at 529–549 (FALYTSLSIFMNAAIPIAAVL) threads the bilayer. Topologically, residues 550–568 (ATFVTHAYASGNNLKPAEA) are extracellular. The helical transmembrane segment at 569 to 589 (FASLSLFHILVTPLFLLSTVV) threads the bilayer. Over 590–986 (RFAVKAIISV…TCWWYLTSGG (397 aa)) the chain is Cytoplasmic. The ABC transporter 1 domain occupies 668 to 908 (IKVTNGYFSW…DVELYEHWKT (241 aa)). An ATP-binding site is contributed by 701 to 708 (GQVGCGKS). Residues 940 to 963 (REAKAQMEDEDEEEEEEEDEDDNM) form a disordered region. Residues 947-962 (EDEDEEEEEEEDEDDN) show a composition bias toward acidic residues. A helical membrane pass occupies residues 987–1007 (FFLLFLMIFSKLLKHSVIVAI). The ABC transmembrane type-1 2 domain occupies 990–1270 (LFLMIFSKLL…VVRNLADLEV (281 aa)). At 1008–1030 (DYWLATWTSEYSINDPGKADQTF) the chain is on the extracellular side. The chain crosses the membrane as a helical span at residues 1031–1051 (YVAGFSILCGAGIFLCLVTSL). The Cytoplasmic segment spans residues 1052 to 1123 (TVEWMGLTAA…TLLCLSAIGM (72 aa)). The helical transmembrane segment at 1124–1144 (ISYATPVFLIALAPLGVAFYF) threads the bilayer. Over 1145–1241 (IQKYFRVASK…IASISGSSNS (97 aa)) the chain is Extracellular. Residues 1242–1262 (GLVGLGLLYALTITNYLNWVV) traverse the membrane as a helical segment. At 1263 to 1545 (RNLADLEVQM…LFSTLVMTNK (283 aa)) the chain is on the cytoplasmic side. In terms of domain architecture, ABC transporter 2 spans 1308-1542 (IKIHDLCVRY…KNGLFSTLVM (235 aa)). 1342-1349 (GRTGSGKS) is an ATP binding site.

The protein belongs to the ABC transporter superfamily. ABCC family. Conjugate transporter (TC 3.A.1.208) subfamily. Interacts with KCNJ11. Interacts with KCNJ8. Expressed at high levels in heart, skeletal muscle and ovary. Moderate levels are found in brain, tongue and pancreatic islets. Low levels are found in lung, testis and adrenal gland. Expressed at very low levels in stomach, colon, thyroid and pituitary.

The protein localises to the membrane. Its function is as follows. Subunit of ATP-sensitive potassium channels (KATP). Can form cardiac and smooth muscle-type KATP channels with KCNJ11. KCNJ11 forms the channel pore while ABCC9 is required for activation and regulation. Can form a sulfonylurea-sensitive but ATP-insensitive potassium channel with KCNJ8. The chain is ATP-binding cassette sub-family C member 9 (Abcc9) from Rattus norvegicus (Rat).